A 31-amino-acid chain; its full sequence is Cytochrome b6-f complex subunit 6 (31 aa).

The helical transmembrane segment at 4 to 26 (IVSYFGFLLTASTITPALFIGLS) threads the bilayer.

Belongs to the PetL family. The 4 large subunits of the cytochrome b6-f complex are cytochrome b6, subunit IV (17 kDa polypeptide, PetD), cytochrome f and the Rieske protein, while the 4 small subunits are PetG, PetL, PetM and PetN. The complex functions as a dimer.

The protein resides in the plastid. It localises to the chloroplast thylakoid membrane. Functionally, component of the cytochrome b6-f complex, which mediates electron transfer between photosystem II (PSII) and photosystem I (PSI), cyclic electron flow around PSI, and state transitions. PetL is important for photoautotrophic growth as well as for electron transfer efficiency and stability of the cytochrome b6-f complex. This is Cytochrome b6-f complex subunit 6 from Nymphaea alba (White water-lily).